Here is a 295-residue protein sequence, read N- to C-terminus: Alpha-soluble NSF attachment protein (295 aa).

An N-acetylmethionine modification is found at M1. 3 positions are modified to phosphoserine: S26, S29, and S195.

The protein belongs to the SNAP family. In terms of assembly, interacts with PRKCABP, and disrupts the interaction between GRIA2 and PRKCABP, leading to the internalization of GRIA2. Found in a complex with VAMP8. Component of a SNARE-like complex that contains at least ZW10, USE1L, RINT1, STX18 and NAPA/SNAP-alpha. Interacts with VTI1A. Interacts with STX12. Interacts with GNA12 (via N-terminus); the interaction promotes CDH5 localization to plasma membrane.

The protein localises to the cell membrane. Functionally, required for vesicular transport between the endoplasmic reticulum and the Golgi apparatus. Together with GNA12 promotes CDH5 localization to plasma membrane. The chain is Alpha-soluble NSF attachment protein (NAPA) from Homo sapiens (Human).